Consider the following 963-residue polypeptide: Ubiquitin carboxyl-terminal hydrolase 11 (963 aa).

Residues 64–93 (VTEDREPQHEELPGLDSQWRQIENGESGRE) form a disordered region. Basic and acidic residues predominate over residues 65 to 75 (TEDREPQHEEL). The DUSP domain occupies 76–184 (PGLDSQWRQI…GQPPIERKVI (109 aa)). K245 bears the N6-acetyllysine mark. Residues 309–930 (CGLTNLGNTC…AAYVLFYQRQ (622 aa)) enclose the USP domain. The active-site Nucleophile is C318. 2 disordered regions span residues 644-691 (TKPN…SGVT) and 716-735 (LFTL…TSPE). Phosphoserine is present on S648. Acidic residues predominate over residues 649-665 (DDEDDGDEKEDDEEDKD). Residues 717–731 (FTLQTVNSNGTSDRT) show a composition bias toward polar residues. S733 bears the Phosphoserine mark. Catalysis depends on H888, which acts as the Proton acceptor. Residues 938–957 (SPAGSSGAPASPACSSPPSS) show a composition bias toward low complexity. The tract at residues 938–963 (SPAGSSGAPASPACSSPPSSEFMDVN) is disordered. S948 is modified (phosphoserine).

The protein belongs to the peptidase C19 family. In terms of assembly, monomer. Associated component of the Polycomb group (PcG) multiprotein PRC1-like complex. Interacts with RANBP9/RANBPM. Interacts with BRCA2. Interacts with CHUK/IKKA. Interacts with NFKBIA. Interacts with SPRY3, RAE1, MYCBP2/PAM, and KCTD6. (Microbial infection) Interacts with papilloma virus protein 16E7.

The protein localises to the nucleus. The protein resides in the cytoplasm. It localises to the chromosome. The catalysed reaction is Thiol-dependent hydrolysis of ester, thioester, amide, peptide and isopeptide bonds formed by the C-terminal Gly of ubiquitin (a 76-residue protein attached to proteins as an intracellular targeting signal).. In terms of biological role, protease that can remove conjugated ubiquitin from target proteins and polyubiquitin chains. Inhibits the degradation of target proteins by the proteasome. Cleaves preferentially 'Lys-6' and 'Lys-63'-linked ubiquitin chains. Has lower activity with 'Lys-11' and 'Lys-33'-linked ubiquitin chains, and extremely low activity with 'Lys-27', 'Lys-29' and 'Lys-48'-linked ubiquitin chains (in vitro). Plays a role in the regulation of pathways leading to NF-kappa-B activation. Plays a role in the regulation of DNA repair after double-stranded DNA breaks. Acts as a chromatin regulator via its association with the Polycomb group (PcG) multiprotein PRC1-like complex; may act by deubiquitinating components of the PRC1-like complex. Promotes cell proliferation by deubiquitinating phosphorylated E2F1. This chain is Ubiquitin carboxyl-terminal hydrolase 11 (USP11), found in Homo sapiens (Human).